The sequence spans 298 residues: Bifunctional protein FolD (298 aa).

NADP(+) is bound by residues 166 to 168 (GRS), serine 191, and isoleucine 232.

Belongs to the tetrahydrofolate dehydrogenase/cyclohydrolase family. Homodimer.

It catalyses the reaction (6R)-5,10-methylene-5,6,7,8-tetrahydrofolate + NADP(+) = (6R)-5,10-methenyltetrahydrofolate + NADPH. The enzyme catalyses (6R)-5,10-methenyltetrahydrofolate + H2O = (6R)-10-formyltetrahydrofolate + H(+). It functions in the pathway one-carbon metabolism; tetrahydrofolate interconversion. Functionally, catalyzes the oxidation of 5,10-methylenetetrahydrofolate to 5,10-methenyltetrahydrofolate and then the hydrolysis of 5,10-methenyltetrahydrofolate to 10-formyltetrahydrofolate. The sequence is that of Bifunctional protein FolD from Erythrobacter litoralis (strain HTCC2594).